The chain runs to 811 residues: Protein kinase C-binding protein NELL2a (811 aa).

An N-terminal signal peptide occupies residues 1-18 (MAFLQLFVGLLCGAAVSA). The Laminin G-like domain maps to 54–225 (AFMFQGSSRS…TQCPDLNRTC (172 aa)). N-linked (GlcNAc...) asparagine glycans are attached at residues asparagine 222, asparagine 290, and asparagine 295. One can recognise a VWFC 1 domain in the interval 269 to 328 (RTCRVKDQIYREEQSWTDGCKNCTCSNGTVRCEKILCPPLDCPDGTTPAYVTGTCCKECQ). The region spanning 395–437 (GHDFCAEENICSENSDCVNLDAGASCGCKNGFRPLRLDSAYCE) is the EGF-like 1 domain. 3 disulfide bridges follow: cysteine 399–cysteine 411, cysteine 405–cysteine 420, and cysteine 422–cysteine 436. Residues aspartate 438, isoleucine 439, and glutamate 441 each contribute to the Ca(2+) site. An EGF-like 2; calcium-binding domain is found at 438–479 (DIDECAEGRHYCRENTECVNTAGSFMCVCHTGFIRIDDYSCT). 9 disulfides stabilise this stretch: cysteine 442-cysteine 455, cysteine 449-cysteine 464, cysteine 466-cysteine 478, cysteine 484-cysteine 497, cysteine 491-cysteine 506, cysteine 508-cysteine 519, cysteine 523-cysteine 533, cysteine 527-cysteine 539, and cysteine 541-cysteine 550. Ca(2+)-binding residues include asparagine 457, threonine 458, and serine 461. In terms of domain architecture, EGF-like 3; calcium-binding spans 480–520 (EHDECASGQHDCDENALCFNTVGGHSCSCKPGYSGNGTVCR). Asparagine 515 carries an N-linked (GlcNAc...) asparagine glycan. Positions 521–551 (ALCDGRCLNGGSCASPNVCVCVQGFSGQNCE) constitute an EGF-like 4 domain. The Ca(2+) site is built by aspartate 553, isoleucine 554, and glutamate 556. Residues 553–592 (DIDECSEGLVQCAAHATCVNLPGWYHCECRDGYHDNEVFS) form the EGF-like 5; calcium-binding domain. 3 cysteine pairs are disulfide-bonded: cysteine 557–cysteine 570, cysteine 564–cysteine 579, and cysteine 581–cysteine 598. Ca(2+) contacts are provided by asparagine 572, leucine 573, and tryptophan 576. Positions 600, 601, and 603 each coordinate Ca(2+). The region spanning 600 to 635 (DIDECRTGRSTCANDTVCFNLDGGFDCRCPHGHNCS) is the EGF-like 6; calcium-binding domain. Disulfide bonds link cysteine 604–cysteine 617, cysteine 611–cysteine 626, and cysteine 628–cysteine 634. N-linked (GlcNAc...) asparagine glycosylation is present at asparagine 613. Residues asparagine 619, leucine 620, and glycine 623 each contribute to the Ca(2+) site. Residue asparagine 633 is glycosylated (N-linked (GlcNAc...) asparagine). 2 consecutive VWFC domains span residues 636 to 691 (GDCI…PECD) and 696 to 754 (SQCL…PRCV).

As to quaternary structure, homotrimer.

The protein resides in the secreted. In terms of biological role, may regulate neuronal differentiation, polarization and axon guidance. This chain is Protein kinase C-binding protein NELL2a (nell2a), found in Danio rerio (Zebrafish).